Here is a 309-residue protein sequence, read N- to C-terminus: 4-hydroxy-3-methylbut-2-enyl diphosphate reductase (309 aa).

[4Fe-4S] cluster is bound at residue Cys12. His43 and His77 together coordinate (2E)-4-hydroxy-3-methylbut-2-enyl diphosphate. Dimethylallyl diphosphate is bound by residues His43 and His77. Isopentenyl diphosphate contacts are provided by His43 and His77. [4Fe-4S] cluster is bound at residue Cys99. His127 is a (2E)-4-hydroxy-3-methylbut-2-enyl diphosphate binding site. His127 contacts dimethylallyl diphosphate. His127 provides a ligand contact to isopentenyl diphosphate. Glu129 serves as the catalytic Proton donor. (2E)-4-hydroxy-3-methylbut-2-enyl diphosphate is bound at residue Thr167. Cys197 is a binding site for [4Fe-4S] cluster. Positions 225, 226, 227, and 269 each coordinate (2E)-4-hydroxy-3-methylbut-2-enyl diphosphate. 4 residues coordinate dimethylallyl diphosphate: Ser225, Ser226, Asn227, and Ser269. The isopentenyl diphosphate site is built by Ser225, Ser226, Asn227, and Ser269.

It belongs to the IspH family. [4Fe-4S] cluster serves as cofactor.

The enzyme catalyses isopentenyl diphosphate + 2 oxidized [2Fe-2S]-[ferredoxin] + H2O = (2E)-4-hydroxy-3-methylbut-2-enyl diphosphate + 2 reduced [2Fe-2S]-[ferredoxin] + 2 H(+). It carries out the reaction dimethylallyl diphosphate + 2 oxidized [2Fe-2S]-[ferredoxin] + H2O = (2E)-4-hydroxy-3-methylbut-2-enyl diphosphate + 2 reduced [2Fe-2S]-[ferredoxin] + 2 H(+). It participates in isoprenoid biosynthesis; dimethylallyl diphosphate biosynthesis; dimethylallyl diphosphate from (2E)-4-hydroxy-3-methylbutenyl diphosphate: step 1/1. Its pathway is isoprenoid biosynthesis; isopentenyl diphosphate biosynthesis via DXP pathway; isopentenyl diphosphate from 1-deoxy-D-xylulose 5-phosphate: step 6/6. In terms of biological role, catalyzes the conversion of 1-hydroxy-2-methyl-2-(E)-butenyl 4-diphosphate (HMBPP) into a mixture of isopentenyl diphosphate (IPP) and dimethylallyl diphosphate (DMAPP). Acts in the terminal step of the DOXP/MEP pathway for isoprenoid precursor biosynthesis. The polypeptide is 4-hydroxy-3-methylbut-2-enyl diphosphate reductase (Wolbachia pipientis wMel).